The primary structure comprises 321 residues: Lipoyl synthase (321 aa).

The [4Fe-4S] cluster site is built by cysteine 68, cysteine 73, cysteine 79, cysteine 94, cysteine 98, cysteine 101, and serine 308. Residues 80–297 (FNHGTATFMI…KAEALAMGFT (218 aa)) form the Radical SAM core domain.

It belongs to the radical SAM superfamily. Lipoyl synthase family. It depends on [4Fe-4S] cluster as a cofactor.

Its subcellular location is the cytoplasm. The catalysed reaction is [[Fe-S] cluster scaffold protein carrying a second [4Fe-4S](2+) cluster] + N(6)-octanoyl-L-lysyl-[protein] + 2 oxidized [2Fe-2S]-[ferredoxin] + 2 S-adenosyl-L-methionine + 4 H(+) = [[Fe-S] cluster scaffold protein] + N(6)-[(R)-dihydrolipoyl]-L-lysyl-[protein] + 4 Fe(3+) + 2 hydrogen sulfide + 2 5'-deoxyadenosine + 2 L-methionine + 2 reduced [2Fe-2S]-[ferredoxin]. The protein operates within protein modification; protein lipoylation via endogenous pathway; protein N(6)-(lipoyl)lysine from octanoyl-[acyl-carrier-protein]: step 2/2. Its function is as follows. Catalyzes the radical-mediated insertion of two sulfur atoms into the C-6 and C-8 positions of the octanoyl moiety bound to the lipoyl domains of lipoate-dependent enzymes, thereby converting the octanoylated domains into lipoylated derivatives. The protein is Lipoyl synthase of Escherichia fergusonii (strain ATCC 35469 / DSM 13698 / CCUG 18766 / IAM 14443 / JCM 21226 / LMG 7866 / NBRC 102419 / NCTC 12128 / CDC 0568-73).